The primary structure comprises 447 residues: Probable tRNA methyltransferase 9B (447 aa).

A Phosphoserine modification is found at S212. Disordered regions lie at residues 274–306 (AWANSTVSQQPSRHPSLDLHAPEPFSTKGPNLD) and 320–348 (WLRTPGTSDNFSGHKGGGSRRKEGGNFLD). Residues 276 to 286 (ANSTVSQQPSR) are compositionally biased toward polar residues.

The protein belongs to the methyltransferase superfamily.

May modify wobble uridines in specific arginine and glutamic acid tRNAs. Acts as a tumor suppressor by promoting the expression of LIN9. This Mus musculus (Mouse) protein is Probable tRNA methyltransferase 9B (Trmt9b).